A 329-amino-acid chain; its full sequence is Replication factor C small subunit 1 (329 aa).

Residue 44 to 51 (GPPGTGKT) participates in ATP binding.

It belongs to the activator 1 small subunits family. RfcS subfamily. In terms of assembly, heteromultimer composed of small subunits (RfcS) and large subunits (RfcL).

Its function is as follows. Part of the RFC clamp loader complex which loads the PCNA sliding clamp onto DNA. The polypeptide is Replication factor C small subunit 1 (Pyrobaculum aerophilum (strain ATCC 51768 / DSM 7523 / JCM 9630 / CIP 104966 / NBRC 100827 / IM2)).